The sequence spans 172 residues: Biogenesis of lysosome-related organelles complex 1 subunit 6 (172 aa).

Disordered stretches follow at residues 1–36 and 135–172; these read MSVPGPSSPDGALTRPPYCLEAGEPTPGLSDTSPDE and RALKLQQKRQKEELEREQQREKEFEREKQLTARPAKRM. Residues 63–167 are a coiled coil; sequence DLQRSKQALQ…FEREKQLTAR (105 aa). Over residues 143–164 the composition is skewed to basic and acidic residues; that stretch reads RQKEELEREQQREKEFEREKQL.

This sequence belongs to the BLOC1S6 family. In terms of assembly, interacts with BLOC1S4 and DTNBP1/BLOC1S7. Homodimer. Component of the biogenesis of lysosome-related organelles complex 1 (BLOC-1) composed of BLOC1S1, BLOC1S2, BLOC1S3, BLOC1S4, BLOC1S5, BLOC1S6, DTNBP1/BLOC1S7 and SNAPIN/BLOC1S8. Octamer composed of one copy each BLOC1S1, BLOC1S2, BLOC1S3, BLOC1S4, BLOC1S5, BLOC1S6, DTNBP1/BLOC1S7 and SNAPIN/BLOC1S8. The BLOC-1 complex associates with the AP-3 protein complex and membrane protein cargos. Interacts with BLOC1S5, F-actin, SNAP25 isoform 1 and isoform 2, SNAP47 and STX12. Phosphorylated. Widely expressed.

It localises to the cytoplasm. Its subcellular location is the membrane. Functionally, component of the BLOC-1 complex, a complex that is required for normal biogenesis of lysosome-related organelles (LRO), such as platelet dense granules and melanosomes. In concert with the AP-3 complex, the BLOC-1 complex is required to target membrane protein cargos into vesicles assembled at cell bodies for delivery into neurites and nerve terminals. The BLOC-1 complex, in association with SNARE proteins, is also proposed to be involved in neurite extension. May play a role in intracellular vesicle trafficking, particularly in the vesicle-docking and fusion process. The polypeptide is Biogenesis of lysosome-related organelles complex 1 subunit 6 (BLOC1S6) (Homo sapiens (Human)).